The primary structure comprises 90 residues: Small ribosomal subunit protein uS15c (90 aa).

It belongs to the universal ribosomal protein uS15 family. As to quaternary structure, part of the 30S ribosomal subunit.

It localises to the plastid. The protein resides in the chloroplast. The protein is Small ribosomal subunit protein uS15c (rps15) of Citrus sinensis (Sweet orange).